Here is a 387-residue protein sequence, read N- to C-terminus: Carbamoyl phosphate synthase small chain (387 aa).

The CPSase stretch occupies residues 1 to 196 (MEGVLSQLAV…FSINKQKFLF (196 aa)). 3 residues coordinate L-glutamine: Ser51, Gly245, and Gly247. Residues 197-384 (HVVVYDFGVK…IKLIVSQKTT (188 aa)) form the Glutamine amidotransferase type-1 domain. Catalysis depends on Cys273, which acts as the Nucleophile. The L-glutamine site is built by Leu274, Gln277, Asn315, and Phe318. Residues His357 and Glu359 contribute to the active site.

This sequence belongs to the CarA family. Composed of two chains; the small (or glutamine) chain promotes the hydrolysis of glutamine to ammonia, which is used by the large (or ammonia) chain to synthesize carbamoyl phosphate. Tetramer of heterodimers (alpha,beta)4.

It catalyses the reaction hydrogencarbonate + L-glutamine + 2 ATP + H2O = carbamoyl phosphate + L-glutamate + 2 ADP + phosphate + 2 H(+). The catalysed reaction is L-glutamine + H2O = L-glutamate + NH4(+). The protein operates within amino-acid biosynthesis; L-arginine biosynthesis; carbamoyl phosphate from bicarbonate: step 1/1. Its pathway is pyrimidine metabolism; UMP biosynthesis via de novo pathway; (S)-dihydroorotate from bicarbonate: step 1/3. Small subunit of the glutamine-dependent carbamoyl phosphate synthetase (CPSase). CPSase catalyzes the formation of carbamoyl phosphate from the ammonia moiety of glutamine, carbonate, and phosphate donated by ATP, constituting the first step of 2 biosynthetic pathways, one leading to arginine and/or urea and the other to pyrimidine nucleotides. The small subunit (glutamine amidotransferase) binds and cleaves glutamine to supply the large subunit with the substrate ammonia. The protein is Carbamoyl phosphate synthase small chain of Buchnera aphidicola subsp. Acyrthosiphon pisum (strain APS) (Acyrthosiphon pisum symbiotic bacterium).